Consider the following 531-residue polypeptide: Inactive beta-amylase 4, chloroplastic (531 aa).

The transit peptide at 1–62 directs the protein to the chloroplast; sequence MTETGVIGCG…KRGRFITKLR (62 aa).

This sequence belongs to the glycosyl hydrolase 14 family. As to expression, preferentially expressed in vascular tissue of cotyledons, leaves, petioles, stems, petals, siliques and roots, particularly in phloem. Also present in root tip.

It is found in the plastid. The protein localises to the chloroplast. No alpha-1,4-glucan hydrolase activity, including beta-amylase, alpha-amylase, a-glucosidase or alpha-amyloglucosidase. However, facilitates or regulates starch breakdown, especially at night, by a mechanism involving direct interaction with starch or other alpha-1,4-glucan. The polypeptide is Inactive beta-amylase 4, chloroplastic (BAM4) (Arabidopsis thaliana (Mouse-ear cress)).